Here is a 262-residue protein sequence, read N- to C-terminus: Small ribosomal subunit protein uS2 (262 aa).

Belongs to the universal ribosomal protein uS2 family.

The chain is Small ribosomal subunit protein uS2 from Rhodospirillum rubrum (strain ATCC 11170 / ATH 1.1.1 / DSM 467 / LMG 4362 / NCIMB 8255 / S1).